The chain runs to 712 residues: Osmolarity two-component system protein SSK1 (712 aa).

The disordered stretch occupies residues 73 to 114; sequence ADNTSSNNTNDNSCRSKSNGAGSGANLSVNSNTKSSVSPTAG. The span at 74–85 shows a compositional bias: low complexity; sequence DNTSSNNTNDNS. Over residues 87-113 the composition is skewed to polar residues; it reads RSKSNGAGSGANLSVNSNTKSSVSPTA. Phosphoserine is present on residues Ser-110, Ser-195, Ser-327, Ser-351, Ser-368, and Ser-380. Residues 340-362 form a disordered region; sequence KADLKGKDGNSSPQEFKLITDEE. The tract at residues 448-468 is disordered; the sequence is EVQRRKEDVTPASPILTSSQT. A Response regulatory domain is found at 505-647; it reads NVLIVEDNVI…WLSKKITEWG (143 aa). Asp-554 is subject to 4-aspartylphosphate. Positions 672–712 are disordered; the sequence is KSPQKPIAPSNPHSFKQATSMTPTHSPVRKNSNLSPTQIEL. Ser-673 is subject to Phosphoserine. Residues 682 to 712 show a composition bias toward polar residues; it reads NPHSFKQATSMTPTHSPVRKNSNLSPTQIEL. A Phosphothreonine modification is found at Thr-693. Ser-703 and Ser-706 each carry phosphoserine.

It belongs to the SSK1 family. As to quaternary structure, interacts with SSK2, SSK22 and YPD1. Post-translationally, the phosphorelay mechanism involves the sequential transfer of a phosphate group from 'His-576' (H1) to 'Asp-1144' (D1) of SLN1, then to 'His-64' (H2) of YPD1 and finally to Asp-554 (D2) of SSK1.

The protein resides in the cytoplasm. Its function is as follows. Final receptor of the SLN1-YPD1-SSK1 two-component regulatory system, which controls activity of the HOG1 pathway in response to changes in the osmolarity of the extracellular environment. Under normal osmotic conditions, maintained in a phosphorylated and inactive state by the phosphorelay intermediate protein YPD1. Under conditions of high osmolarity, the histidine kinase SLN1 is no longer active and the unphosphorylated form of SSK1 interacts with and activates SSK2 and SSK22, two MAPKKKs that further stimulate the PBS2-HOG1 MAPKK-MAPK cascade. Unphosphorylated SSK1 is subsequently degraded by the UBC7-dependent ubiquitin-proteasome system to down-regulate the HOG1 pathway after completion of the osmotic adaptation. The polypeptide is Osmolarity two-component system protein SSK1 (Saccharomyces cerevisiae (strain ATCC 204508 / S288c) (Baker's yeast)).